The chain runs to 224 residues: 7-cyano-7-deazaguanine synthase (224 aa).

12–22 (LSGGLDSSTVT) provides a ligand contact to ATP. Residues Cys-193, Cys-201, Cys-204, and Cys-207 each contribute to the Zn(2+) site.

It belongs to the QueC family. It depends on Zn(2+) as a cofactor.

The catalysed reaction is 7-carboxy-7-deazaguanine + NH4(+) + ATP = 7-cyano-7-deazaguanine + ADP + phosphate + H2O + H(+). It functions in the pathway purine metabolism; 7-cyano-7-deazaguanine biosynthesis. Functionally, catalyzes the ATP-dependent conversion of 7-carboxy-7-deazaguanine (CDG) to 7-cyano-7-deazaguanine (preQ(0)). This Prochlorococcus marinus (strain MIT 9515) protein is 7-cyano-7-deazaguanine synthase.